The chain runs to 97 residues: Small, acid-soluble spore protein gamma-type (97 aa).

The span at 1-42 (MAKQTNKTASGTSTQHVKQQNAQASKNNFGTEFGSETNVQEV) shows a compositional bias: polar residues. The interval 1–97 (MAKQTNKTAS…KNQNSGKYQG (97 aa)) is disordered. Repeats lie at residues 23-56 (QASKNNFGTEFGSETNVQEVKQQNAQAAANKSQN) and 58-91 (QASKNNFGTEFASETSAQEVRQQNAQAQAKKNQN). The span at 43–63 (KQQNAQAAANKSQNAQASKNN) shows a compositional bias: low complexity. The segment covering 69-78 (ASETSAQEVR) has biased composition (polar residues). Residues 79–91 (QQNAQAQAKKNQN) show a composition bias toward low complexity.

This sequence belongs to the gamma-type SASP family.

In terms of biological role, SASP are proteins degraded in the first minutes of spore germination and provide amino acids for both new protein synthesis and metabolism. These proteins may be involved in dormant spore's high resistance to UV light. This chain is Small, acid-soluble spore protein gamma-type (sasP-B), found in Priestia megaterium (Bacillus megaterium).